The chain runs to 111 residues: Beta-defensin 126 (111 aa).

The N-terminal stretch at 1 to 20 is a signal peptide; that stretch reads MKSLLFTLAVFMLLAQLVSG. Positions 21–63 are in vitro binds to LPS, mediates antimicrobial activity and inhibits LPS-mediated inflammation; the sequence is NWYVKKCLNDVGICKKKCKPEEMHVKNGWAMCGKQRDCCVPAD. 3 cysteine pairs are disulfide-bonded: cysteine 27–cysteine 58, cysteine 34–cysteine 52, and cysteine 38–cysteine 59.

Belongs to the beta-defensin family. Homodimer or homooligomer; disulfide-linked. In terms of processing, O-glycosylated; glycans contain alpha(2,3)-linked sialic acids.

It localises to the secreted. Its function is as follows. Highly glycosylated atypical beta-defensin involved in several aspects of sperm function. Facilitates sperm transport in the female reproductive tract and contributes to sperm protection against immunodetection; both functions are probably implicating the negative surface charge provided by its O-linked oligosaccharides in the sperm glycocalyx. Involved in binding of sperm to oviductal epithelial cells to form a sperm reservoir until ovulation. Release from the sperm surface during capacitation and ovaluation by an elevation of oviductal fluid pH is unmasking other surface components and allows sperm to penetrate the cumulus matrix and bind to the zona pellucida of the oocyte. In vitro has antimicrobial activity and may inhibit LPS-mediated inflammation. This is Beta-defensin 126 (DEFB126) from Gorilla gorilla gorilla (Western lowland gorilla).